The sequence spans 550 residues: Hydroxylamine reductase (550 aa).

[2Fe-2S] cluster is bound by residues C4, C7, C19, and C26. 8 residues coordinate hybrid [4Fe-2O-2S] cluster: H249, E273, C317, C405, C433, C458, E492, and K494. Residue C405 is modified to Cysteine persulfide.

Belongs to the HCP family. It depends on [2Fe-2S] cluster as a cofactor. The cofactor is hybrid [4Fe-2O-2S] cluster.

The protein localises to the cytoplasm. It catalyses the reaction A + NH4(+) + H2O = hydroxylamine + AH2 + H(+). Functionally, catalyzes the reduction of hydroxylamine to form NH(3) and H(2)O. The sequence is that of Hydroxylamine reductase from Aeromonas salmonicida (strain A449).